Here is a 222-residue protein sequence, read N- to C-terminus: Phosphatidylinositol phosphate synthase (222 aa).

Residue 31 to 34 (DIVT) participates in a CDP-1,2-diacyl-sn-glycerol binding. 2 helical membrane passes run 32–49 (IVTLAGTAAAVIGALTLF) and 55–74 (WWGAVVVSFFVLADMLDGAM). Mg(2+) contacts are provided by Asp68 and Asp71. A CDP-1,2-diacyl-sn-glycerol-binding residues include Gly72, Arg76, and Thr82. Residues Asp89 and Asp93 each contribute to the Mg(2+) site. Asp93 serves as the catalytic Proton acceptor. Helical transmembrane passes span 95 to 112 (LGDGAVFAGLTWWAAFGL), 118 to 136 (VVATLICLVTSQVISYIKA), 156 to 173 (LVIVLIGAGLSDLPFFPL), and 179 to 196 (VAMWVLAVASVVTLLQRV).

It belongs to the CDP-alcohol phosphatidyltransferase class-I family. Homodimer. Requires Mg(2+) as cofactor.

It localises to the cell membrane. The protein localises to the secreted. The protein resides in the cell wall. It catalyses the reaction a CDP-1,2-diacyl-sn-glycerol + 1D-myo-inositol 3-phosphate = a 1,2-diacyl-sn-glycero-3-phospho-(1D-myo-inositol-3-phosphate) + CMP + H(+). It carries out the reaction 1,2-di-(9Z-octadecenoyl)-sn-glycero-3-cytidine-5'-diphosphate + 1D-myo-inositol 3-phosphate = 1,2-di-(9Z-octadecenoyl)-sn-glycero-3-phospho-(1D-myo-inositol-3-phosphate) + CMP + H(+). The enzyme catalyses 1,2-dihexadecanoyl-sn-glycero-3-CDP + 1D-myo-inositol 3-phosphate = 1,2-dihexadecanoyl-sn-glycero-3-phospho-(1D-myo-inositol-3-phosphate) + CMP + H(+). Its pathway is phospholipid metabolism; phosphatidylinositol phosphate biosynthesis. With respect to regulation, competitively inhibited by several inositol 1-phosphate analogs, including the phosphonate analog 1-deoxy-1-phosphonomethyl-myo-inositol (Ino-C-P). This leads to inhibition of M.smegmatis growth. Catalyzes the conjugation of the 1'-hydroxyl group of D-myo-inositol-3-phosphate (also named L-myo-inositol-1-phosphate) with a lipid tail of cytidine diphosphate diacylglycerol (CDP-DAG), forming phosphatidylinositol phosphate (PIP) and CMP. PIP is a precursor of phosphatidylinositol (PI) which is an essential lipid for mycobacteria required for formation of their cell wall. Is essential to the survival of M.smegmatis. The sequence is that of Phosphatidylinositol phosphate synthase from Mycolicibacterium smegmatis (strain ATCC 700084 / mc(2)155) (Mycobacterium smegmatis).